The chain runs to 306 residues: uncharacterized protein (306 aa).

A coiled-coil region spans residues 277–306 (TEIIQNYKIANELKKEKQQNKKKNSIELEE).

This is an uncharacterized protein from Saccharolobus islandicus (Sulfolobus islandicus).